We begin with the raw amino-acid sequence, 130 residues long: Secreted RxLR effector protein 68 (130 aa).

A signal peptide spans 1–29; that stretch reads MRCVCASIRRTRIIEFLMFFALSSSTASC. A glycan (N-linked (GlcNAc...) asparagine) is linked at Asn-36. The RxLR motif lies at 45 to 48; it reads RWLR.

This sequence belongs to the RxLR effector family.

The protein localises to the secreted. It localises to the host cytoplasm. Its subcellular location is the host nucleus. In terms of biological role, effector that acts as a broad suppressor of cell death to interrupt plant immunity. Inhibits cell death induced by cell death-inducing proteins, including the PAMP elicitor INF1 from P.infestans. This chain is Secreted RxLR effector protein 68, found in Plasmopara viticola (Downy mildew of grapevine).